Here is a 740-residue protein sequence, read N- to C-terminus: Ion-translocating oxidoreductase complex subunit C (740 aa).

4Fe-4S ferredoxin-type domains follow at residues 369–397 (GEPQ…QQLY) and 407–436 (KATT…VQYF). Residues cysteine 377, cysteine 380, cysteine 383, cysteine 387, cysteine 416, cysteine 419, cysteine 422, and cysteine 426 each contribute to the [4Fe-4S] cluster site. Disordered stretches follow at residues 602–621 (KLEQ…PRKA) and 660–718 (ARAK…RKAA). Basic and acidic residues predominate over residues 611 to 621 (KPEEQVDPRKA).

The protein belongs to the 4Fe4S bacterial-type ferredoxin family. RnfC subfamily. As to quaternary structure, the complex is composed of six subunits: RsxA, RsxB, RsxC, RsxD, RsxE and RsxG. The cofactor is [4Fe-4S] cluster.

Its subcellular location is the cell inner membrane. Functionally, part of a membrane-bound complex that couples electron transfer with translocation of ions across the membrane. Required to maintain the reduced state of SoxR. The polypeptide is Ion-translocating oxidoreductase complex subunit C (Escherichia coli O9:H4 (strain HS)).